Reading from the N-terminus, the 555-residue chain is uncharacterized protein (555 aa).

The next 5 helical transmembrane spans lie at 13–30 (ALQA…GLGL), 35–57 (FWGV…HFGL), 72–91 (LVIF…FSSF), 98–120 (LNML…SYAT), and 157–179 (TPAL…AVLL). 2 RCK C-terminal domains span residues 188–273 (EDLE…LFGE) and 282–366 (KEDI…VLGN). Helical transmembrane passes span 376–398 (LVVI…SIPG), 408–430 (AGGP…MITY), 437–459 (LMLR…GAHF), 469–491 (LLWI…FVAF), 498–517 (FGSV…ALNY), and 532–554 (ATVY…MFLL).

This sequence belongs to the AAE transporter (TC 2.A.81) family.

It is found in the cell membrane. This is an uncharacterized protein from Bacteroides thetaiotaomicron (strain ATCC 29148 / DSM 2079 / JCM 5827 / CCUG 10774 / NCTC 10582 / VPI-5482 / E50).